Here is an 89-residue protein sequence, read N- to C-terminus: Small ribosomal subunit protein uS15 (89 aa).

Residues 1 to 21 are compositionally biased toward basic and acidic residues; sequence MALTTEEKKQVLSEYGLHETD. Residues 1 to 24 form a disordered region; that stretch reads MALTTEEKKQVLSEYGLHETDTGS.

It belongs to the universal ribosomal protein uS15 family. As to quaternary structure, part of the 30S ribosomal subunit. Forms a bridge to the 50S subunit in the 70S ribosome, contacting the 23S rRNA.

Its function is as follows. One of the primary rRNA binding proteins, it binds directly to 16S rRNA where it helps nucleate assembly of the platform of the 30S subunit by binding and bridging several RNA helices of the 16S rRNA. In terms of biological role, forms an intersubunit bridge (bridge B4) with the 23S rRNA of the 50S subunit in the ribosome. The sequence is that of Small ribosomal subunit protein uS15 from Rhodococcus opacus (strain B4).